The chain runs to 396 residues: Elongation factor Tu (396 aa).

One can recognise a tr-type G domain in the interval Lys-10–Glu-206. Positions Gly-19–Thr-26 are G1. Position 19-26 (Gly-19–Thr-26) interacts with GTP. Residue Thr-26 participates in Mg(2+) binding. Residues Gly-60–Ser-64 are G2. Positions Asp-81 to Gly-84 are G3. GTP-binding positions include Asp-81–His-85 and Asn-136–Asp-139. Residues Asn-136 to Asp-139 form a G4 region. The tract at residues Ser-174–Leu-176 is G5.

This sequence belongs to the TRAFAC class translation factor GTPase superfamily. Classic translation factor GTPase family. EF-Tu/EF-1A subfamily. As to quaternary structure, monomer.

The protein resides in the cytoplasm. It catalyses the reaction GTP + H2O = GDP + phosphate + H(+). GTP hydrolase that promotes the GTP-dependent binding of aminoacyl-tRNA to the A-site of ribosomes during protein biosynthesis. The sequence is that of Elongation factor Tu from Bradyrhizobium sp. (strain BTAi1 / ATCC BAA-1182).